The chain runs to 884 residues: Protein translocase subunit SecA (884 aa).

ATP-binding positions include Q88, G106 to T110, and D509. A disordered region spans residues E822–D884. Over residues K833–K842 the composition is skewed to basic and acidic residues. Zn(2+) contacts are provided by C858, C860, C869, and H870.

Belongs to the SecA family. In terms of assembly, monomer and homodimer. Part of the essential Sec protein translocation apparatus which comprises SecA, SecYEG and auxiliary proteins SecDF-YajC and YidC. It depends on Zn(2+) as a cofactor.

It is found in the cell inner membrane. Its subcellular location is the cytoplasm. It catalyses the reaction ATP + H2O + cellular proteinSide 1 = ADP + phosphate + cellular proteinSide 2.. In terms of biological role, part of the Sec protein translocase complex. Interacts with the SecYEG preprotein conducting channel. Has a central role in coupling the hydrolysis of ATP to the transfer of proteins into and across the cell membrane, serving as an ATP-driven molecular motor driving the stepwise translocation of polypeptide chains across the membrane. This Campylobacter hominis (strain ATCC BAA-381 / DSM 21671 / CCUG 45161 / LMG 19568 / NCTC 13146 / CH001A) protein is Protein translocase subunit SecA.